The sequence spans 227 residues: tRNA pseudouridine synthase B (227 aa).

Aspartate 42 serves as the catalytic Nucleophile.

It belongs to the pseudouridine synthase TruB family. Type 1 subfamily.

The enzyme catalyses uridine(55) in tRNA = pseudouridine(55) in tRNA. Responsible for synthesis of pseudouridine from uracil-55 in the psi GC loop of transfer RNAs. The sequence is that of tRNA pseudouridine synthase B from Ureaplasma parvum serovar 3 (strain ATCC 27815 / 27 / NCTC 11736).